A 227-amino-acid chain; its full sequence is Ribosomal RNA large subunit methyltransferase E (227 aa).

Positions 78, 80, 103, 119, and 143 each coordinate S-adenosyl-L-methionine. Lys-183 acts as the Proton acceptor in catalysis.

The protein belongs to the class I-like SAM-binding methyltransferase superfamily. RNA methyltransferase RlmE family.

The protein resides in the cytoplasm. It catalyses the reaction uridine(2552) in 23S rRNA + S-adenosyl-L-methionine = 2'-O-methyluridine(2552) in 23S rRNA + S-adenosyl-L-homocysteine + H(+). Specifically methylates the uridine in position 2552 of 23S rRNA at the 2'-O position of the ribose in the fully assembled 50S ribosomal subunit. The polypeptide is Ribosomal RNA large subunit methyltransferase E (Rickettsia felis (strain ATCC VR-1525 / URRWXCal2) (Rickettsia azadi)).